A 304-amino-acid polypeptide reads, in one-letter code: MTMDGKNKEEEQYLDLCKRIIDEGEFRPDRTGTGTLSLFAPPQLRFSLRDDTFPLLTTKKVFTRGIILELLWFLAGDTDANLLSEQGVKIWDGNGSREYLDKMGFKDRKVGDLGPVYGFQWRHFGAKYKTCDDDYTGQGIDQLKQVIHKLKTNPYDRRIIMSAWNPADFDKMALPPCHIFSQFYVSFPKEGEGSGKPRLSCLLYQRSCDMGLGVPFNIASYALLTRMIAKVVDMEPGEFIHTLGDAHVYKDHIDALKEQITRNPRPFPKLKIKRDVKDIDDFKLTDFEIEDYNPHPRIQMKMSV.

Residues R30 and 157 to 158 (RR) each bind dUMP. Catalysis depends on C177, which acts as the Nucleophile. DUMP is bound by residues 206–209 (RSCD), N217, and 247–249 (HVY). D209 serves as a coordination point for (6R)-5,10-methylene-5,6,7,8-tetrahydrofolate.

The protein belongs to the thymidylate synthase family. In terms of assembly, homodimer.

The protein resides in the nucleus. It carries out the reaction dUMP + (6R)-5,10-methylene-5,6,7,8-tetrahydrofolate = 7,8-dihydrofolate + dTMP. Its pathway is pyrimidine metabolism; dTTP biosynthesis. Inhibited by 5-fluoro-2'-deoxyuridine 5'-monophosphate (FdUMP). Functionally, thymidylate synthase required for de novo biosynthesis of pyrimidine deoxyribonucleotides. Required for both nuclear and mitochondrial DNA synthesis. This Saccharomyces cerevisiae (strain ATCC 204508 / S288c) (Baker's yeast) protein is Thymidylate synthase (CDC21).